The chain runs to 357 residues: Protein-glutamate methylesterase/protein-glutamine glutaminase 5 (357 aa).

The Response regulatory domain occupies 10 to 127 (RVLVVDDSSF…IDAQKAFKEE (118 aa)). Residue D61 is modified to 4-aspartylphosphate. One can recognise a CheB-type methylesterase domain in the interval 161-357 (PRPAGQRYQY…IGTEITKIAG (197 aa)). Active-site residues include S176, H203, and D301.

This sequence belongs to the CheB family. Phosphorylated by CheA. Phosphorylation of the N-terminal regulatory domain activates the methylesterase activity.

Its subcellular location is the cytoplasm. It carries out the reaction [protein]-L-glutamate 5-O-methyl ester + H2O = L-glutamyl-[protein] + methanol + H(+). The enzyme catalyses L-glutaminyl-[protein] + H2O = L-glutamyl-[protein] + NH4(+). Functionally, involved in chemotaxis. Part of a chemotaxis signal transduction system that modulates chemotaxis in response to various stimuli. Catalyzes the demethylation of specific methylglutamate residues introduced into the chemoreceptors (methyl-accepting chemotaxis proteins or MCP) by CheR. Also mediates the irreversible deamidation of specific glutamine residues to glutamic acid. This Geobacter metallireducens (strain ATCC 53774 / DSM 7210 / GS-15) protein is Protein-glutamate methylesterase/protein-glutamine glutaminase 5.